We begin with the raw amino-acid sequence, 1203 residues long: Delphilin (1203 aa).

Residues 1–79 (MPATNQGWPE…VPPSLGVLPG (79 aa)) form the PDZ 1 domain. Ala3 is lipidated: S-palmitoyl cysteine. The interval 215–270 (GAQRLRRSRSEERPERLLVSTRASAAPRRPDEPPPRKATSLLGGRTGPGGPRRTVR) is disordered. Residues 231 to 241 (LLVSTRASAAP) are compositionally biased toward low complexity. A PDZ 2 domain is found at 268 to 345 (TVRVYKGNKS…MPTLVVEEGP (78 aa)). Ser303 is subject to Phosphoserine. 4 disordered regions span residues 466-541 (ESSL…TPNP), 563-586 (IGTM…GPRT), 611-656 (LASP…PPSR), and 710-821 (SFVT…SHMS). A compositionally biased stretch (polar residues) spans 500–509 (RSQGLETSLS). 4 positions are modified to phosphoserine: Ser572, Ser613, Ser644, and Ser647. Positions 611–625 (LASPSSSESHPYASL) are enriched in low complexity. Over residues 715 to 740 (ERSSASECVSSSEEGSSLTYSSISDH) the composition is skewed to low complexity. A compositionally biased stretch (pro residues) spans 741-756 (IPPPPLSPPPPPPLPF). The segment covering 774–784 (QSLTKPLTQIN) has biased composition (polar residues). The segment covering 786 to 803 (PVPPPPPPPLPPPVPCAP) has biased composition (pro residues). Residues 812 to 1203 (HRRSETSHMS…SSGMVSPLAW (392 aa)) form the FH2 domain.

As to quaternary structure, interacts with C-terminus of the glutamate receptor GRID2 via PDZ domain. Isoform 2 also interacts with Profilin-2/PFN2 and with the monocarboxylate transporter SLC16A7 via PDZ domain. The interaction of isoform 2 with GRID2 is dependent on GRID2 phosphorylation by PKA. In terms of processing, isoform 2 is palmitoylated. Palmitoylation of isoform 2 is necessary for the enhanced cell surface expression of GRID2, and is also responsible for the accumulation of isoform 2 within dendritic spines. Isoform 1 and isoform 2 are differentially localized, probably modulating GRID2 signaling in neurons. In terms of tissue distribution, isoform 1 is expressed in the cerebellum, but not in the cerebral cortex. Isoform 2 is expressed in the cell body of purkinge cells of the cerebellum and weakly expressed in the cerebrum and the brainstem as well as various nuclei of the thalamus. Isoform 2 is highly expressed in the cerebral cortex than in the cerebellum. Isoform 3 is expressed in the cerebellum and cerebrum.

It is found in the postsynaptic cell membrane. The protein localises to the cell projection. Its subcellular location is the dendritic spine. The protein resides in the synapse. It localises to the cell membrane. In terms of biological role, postsynaptic scaffolding protein at the Purkinje cell synapse, where it may serve to link GRID2 with actin cytoskeleton and various signaling molecules. The polypeptide is Delphilin (Grid2ip) (Mus musculus (Mouse)).